Reading from the N-terminus, the 108-residue chain is Urease subunit gamma (108 aa).

This sequence belongs to the urease gamma subunit family. Heterotrimer of UreA (gamma), UreB (beta) and UreC (alpha) subunits. Three heterotrimers associate to form the active enzyme.

The protein resides in the cytoplasm. It catalyses the reaction urea + 2 H2O + H(+) = hydrogencarbonate + 2 NH4(+). It participates in nitrogen metabolism; urea degradation; CO(2) and NH(3) from urea (urease route): step 1/1. In Trichodesmium erythraeum (strain IMS101), this protein is Urease subunit gamma.